Consider the following 407-residue polypeptide: Phosphopentomutase (407 aa).

Positions 10, 306, 311, 347, 348, and 359 each coordinate Mn(2+).

Belongs to the phosphopentomutase family. Mn(2+) is required as a cofactor.

The protein localises to the cytoplasm. The catalysed reaction is 2-deoxy-alpha-D-ribose 1-phosphate = 2-deoxy-D-ribose 5-phosphate. It carries out the reaction alpha-D-ribose 1-phosphate = D-ribose 5-phosphate. It functions in the pathway carbohydrate degradation; 2-deoxy-D-ribose 1-phosphate degradation; D-glyceraldehyde 3-phosphate and acetaldehyde from 2-deoxy-alpha-D-ribose 1-phosphate: step 1/2. In terms of biological role, isomerase that catalyzes the conversion of deoxy-ribose 1-phosphate (dRib-1-P) and ribose 1-phosphate (Rib-1-P) to deoxy-ribose 5-phosphate (dRib-5-P) and ribose 5-phosphate (Rib-5-P), respectively. This Salmonella paratyphi A (strain AKU_12601) protein is Phosphopentomutase.